The following is a 452-amino-acid chain: Maltoporin (452 aa).

An N-terminal signal peptide occupies residues 1-25 (MMITLRKLPLAVAVAAGVMSAQAMA).

It belongs to the porin LamB (TC 1.B.3) family. In terms of assembly, homotrimer formed of three 18-stranded antiparallel beta-barrels, containing three independent channels.

The protein localises to the cell outer membrane. It carries out the reaction beta-maltose(in) = beta-maltose(out). Its function is as follows. Involved in the transport of maltose and maltodextrins. This chain is Maltoporin, found in Salmonella heidelberg (strain SL476).